Consider the following 346-residue polypeptide: Uroporphyrinogen decarboxylase (346 aa).

Residues 23–27 (RQAGR), D73, Y151, S206, and H321 contribute to the substrate site.

The protein belongs to the uroporphyrinogen decarboxylase family. In terms of assembly, homodimer.

It localises to the cytoplasm. It catalyses the reaction uroporphyrinogen III + 4 H(+) = coproporphyrinogen III + 4 CO2. The protein operates within porphyrin-containing compound metabolism; protoporphyrin-IX biosynthesis; coproporphyrinogen-III from 5-aminolevulinate: step 4/4. Functionally, catalyzes the decarboxylation of four acetate groups of uroporphyrinogen-III to yield coproporphyrinogen-III. The sequence is that of Uroporphyrinogen decarboxylase from Aliarcobacter butzleri (strain RM4018) (Arcobacter butzleri).